Reading from the N-terminus, the 388-residue chain is Translation initiation factor eIF2B subunit beta (388 aa).

Residues 109-133 (DDFETTTSNNNNNNNNNNINSSSNI) are disordered. Low complexity predominate over residues 116–133 (SNNNNNNNNNNINSSSNI).

It belongs to the eIF-2B alpha/beta/delta subunits family. Component of the translation initiation factor 2B (eIF2B) complex which is a heterodecamer of two sets of five different subunits: alpha, beta, gamma, delta and epsilon. Subunits alpha, beta and delta comprise a regulatory subcomplex and subunits epsilon and gamma comprise a catalytic subcomplex. Within the complex, the hexameric regulatory complex resides at the center, with the two heterodimeric catalytic subcomplexes bound on opposite sides.

It localises to the cytoplasm. It is found in the cytosol. Acts as a component of the translation initiation factor 2B (eIF2B) complex, which catalyzes the exchange of GDP for GTP on eukaryotic initiation factor 2 (eIF2) gamma subunit. Its guanine nucleotide exchange factor activity is repressed when bound to eIF2 complex phosphorylated on the alpha subunit, thereby limiting the amount of methionyl-initiator methionine tRNA available to the ribosome and consequently global translation is repressed. This Dictyostelium discoideum (Social amoeba) protein is Translation initiation factor eIF2B subunit beta (eif2b2).